The following is a 452-amino-acid chain: Activating transcription factor 7-interacting protein 2 (452 aa).

Serine 184 is modified (phosphoserine). The tract at residues 185–206 (RSKRISSVNHTPLNSSEKAGRK) is disordered. At serine 257 the chain carries Phosphoserine. A Fibronectin type-III domain is found at 346–450 (PPQKPELKVK…IKSIPRFSEN (105 aa)).

This sequence belongs to the MCAF family. Interacts with MBD1, SETDB1 and SP1. Probably forms a complex with SETDB1 and MBD1. Expressed in testis.

The protein resides in the nucleus. Its function is as follows. Recruiter that couples transcriptional factors to general transcription apparatus and thereby modulates transcription regulation and chromatin formation. Can both act as an activator or a repressor depending on the context. Mediates MBD1-dependent transcriptional repression, probably by recruiting complexes containing SETDB1. The complex formed with MBD1 and SETDB1 represses transcription and probably couples DNA methylation and histone H3 'Lys-9' trimethylation (H3K9me3) activity. In Mus musculus (Mouse), this protein is Activating transcription factor 7-interacting protein 2 (Atf7ip2).